Reading from the N-terminus, the 222-residue chain is GTP cyclohydrolase 1 (222 aa).

The Zn(2+) site is built by Cys111, His114, and Cys182.

It belongs to the GTP cyclohydrolase I family. In terms of assembly, homomer.

The enzyme catalyses GTP + H2O = 7,8-dihydroneopterin 3'-triphosphate + formate + H(+). It participates in cofactor biosynthesis; 7,8-dihydroneopterin triphosphate biosynthesis; 7,8-dihydroneopterin triphosphate from GTP: step 1/1. In Klebsiella pneumoniae (strain 342), this protein is GTP cyclohydrolase 1.